A 4168-amino-acid polypeptide reads, in one-letter code: Centrosome-associated protein ALMS1 (4168 aa).

Residues 1-29 (MEPEDLPWPGELEEEEEEEEEEEEEEEEA) show a composition bias toward acidic residues. A disordered region spans residues 1–69 (MEPEDLPWPG…YGPQHLESID (69 aa)). Residues 30-40 (AAAAAANVDDV) are compositionally biased toward low complexity. Residues 49 to 58 (EAGRELDSDS) show a composition bias toward basic and acidic residues. Residue Ser-464 is modified to Phosphoserine. A run of 34 repeats spans residues 539–585 (QKTL…SIFY), 586–632 (QQGL…GTFY), 633–679 (QQEL…LFFY), 680–726 (RQTL…GIFY), 727–774 (QQEF…SILY), 775–821 (PQDL…LVFY), 822–871 (QQAL…SAFY), 872–918 (QQTL…IIFS), 919–965 (QQTL…SVFY), 966–1013 (QQEL…SIFY), 1014–1060 (QQEW…SVLY), 1061–1107 (PQVL…GIFY), 1108–1155 (QQTL…SIFH), 1156–1202 (QQAL…GIFY), 1203–1249 (QQTL…GIFY), 1250–1297 (QQVL…SIFY), 1298–1344 (QQSL…GVFY), 1345–1392 (QQVL…SIFY), 1393–1439 (QQSL…GSFY), 1440–1486 (QQVL…IVIY), 1487–1534 (KQAF…GSFY), 1535–1581 (QLAL…IVNY), 1582–1628 (KQAF…ITFY), 1629–1675 (RQAL…VIFY), 1676–1722 (QQTL…IVFY), 1723–1769 (QQAL…NISY), 1770–1816 (QQEL…IVSY), 1817–1861 (QREL…VISY), 1862–1906 (EQEL…SIFH), 1907–1951 (QQEL…SVIS), 1952–1999 (QQEL…LKIS), 2060–2105 (QQLP…NIFS), 2106–2152 (PQEL…DIFY), and 2153–2200 (QKDL…LVSE). Residues 539 to 2200 (QKTLADTHLT…HGENHKLVSE (1662 aa)) form a 34 X 47 AA approximate tandem repeat region. Disordered stretches follow at residues 558-579 (PEPADQKTATPTVLSSSHSHRG) and 606-625 (GLADQTTGMSTLTSTSYSHR). 2 stretches are compositionally biased toward polar residues: residues 564 to 574 (KTATPTVLSSS) and 609 to 622 (DQTTGMSTLTSTSY). Disordered stretches follow at residues 699 to 718 (SGPADQKTGTATVLSTPHSH) and 735 to 769 (QTEETLTKVSATPGPADQKTEIPAVQSSSYSQREK). The span at 705–715 (KTGTATVLSTP) shows a compositional bias: polar residues. Residues 841–865 (SGPADGKTGTPAVTSTSSASSSLGE) are disordered. Disordered regions lie at residues 946–969 (GTPTVSSNSHSHSEKSSVFYQQEL), 983–1007 (AIPGLTDQKTVPTPTVPSGSFSHRE), and 1027–1055 (LKVSTGPGPADQKTEIPAVQSSSYPQREK). Over residues 989–1003 (DQKTVPTPTVPSGSF) the composition is skewed to polar residues. At Ser-1189 the chain carries Phosphoserine. Positions 1221–1241 (VLGPADQKTGTPTPTSASYSH) are disordered. The segment covering 1228–1240 (KTGTPTPTSASYS) has biased composition (polar residues). Residues 1786 to 1806 (SNVPGPADQKTGVSTVTSTSY) form a disordered region. Residues 1796 to 1806 (TGVSTVTSTSY) are compositionally biased toward low complexity. Ser-2143 carries the phosphoserine modification. Disordered regions lie at residues 2456–2477 (ITDSREEEGVSESEDGGGSSVD) and 2600–2621 (HPCAFRSAGPSEMTRGRQNPSS). Ser-2466 carries the post-translational modification Phosphoserine. Ser-2632 carries the phosphoserine modification. Disordered stretches follow at residues 2753-2828 (HFTE…STRA), 2892-2912 (KAPRADDHVRKHHSPSPQHQD), 3283-3310 (RQIPPSPDSKSDTTVESSHSGSNDAIAP), 3389-3426 (EAAQAKEKESLQKDTADSSAAAAAEHSAQVGDPEMKNL), 3566-3594 (QVRDYPKHNGQISDPQRDQKVTPEQTTQH), and 3643-3704 (SLQV…HRAG). Over residues 2754 to 2766 (FTEEQNPPRDLKQ) the composition is skewed to basic and acidic residues. Residues 2767–2779 (KTSSPSSFKMHSN) show a composition bias toward polar residues. Basic and acidic residues-rich tracts occupy residues 2780–2793 (SQDKEVTILAEGRR) and 2800–2816 (VDFERSFQEEKPLERSD). At Ser-2805 the chain carries Phosphoserine. Residues 2817 to 2828 (FTGSHSEPSTRA) are compositionally biased toward polar residues. Residues 3294-3305 (DTTVESSHSGSN) are compositionally biased toward polar residues. The span at 3392 to 3404 (QAKEKESLQKDTA) shows a compositional bias: basic and acidic residues. Positions 3405–3416 (DSSAAAAAEHSA) are enriched in low complexity. 2 stretches are compositionally biased toward basic and acidic residues: residues 3649–3664 (STHDDSRGERSVKEWS) and 3680–3694 (KSLEKSHKNTGELKK). The segment covering 3695–3704 (SKVLSHHRAG) has biased composition (basic residues). The tract at residues 4036 to 4167 (TLQESLQFHR…NQLLGRKVPW (132 aa)) is ALMS motif.

It belongs to the ALMS1 family. Expressed in all tissues tested including adipose and pancreas. Expressed by beta-cells of the islets in the pancreas (at protein level).

The protein localises to the cytoplasm. Its subcellular location is the cytoskeleton. It is found in the microtubule organizing center. It localises to the centrosome. The protein resides in the cilium basal body. The protein localises to the spindle pole. Functionally, involved in PCM1-dependent intracellular transport. Required, directly or indirectly, for the localization of NCAPD2 to the proximal ends of centrioles. Required for proper formation and/or maintenance of primary cilia (PC), microtubule-based structures that protrude from the surface of epithelial cells. In Homo sapiens (Human), this protein is Centrosome-associated protein ALMS1 (ALMS1).